The primary structure comprises 618 residues: DELLA protein SLN1 (618 aa).

Positions 1–36 (MKREYQDGGGSGGGGDEMGSSRDKMMVSSSEAGEGE) are disordered. Residues 7 to 17 (DGGGSGGGGDE) show a composition bias toward gly residues. The short motif at 39 to 43 (DELLA) is the DELLA motif element. Disordered stretches follow at residues 106–137 (LNAP…YFDL) and 159–197 (APAD…GAAR). A compositionally biased stretch (pro residues) spans 108–118 (APPPPLPPAPP). Low complexity-rich tracts occupy residues 119-128 (QLNASTSSTV) and 176-197 (TGGS…GAAR). Residues 221-614 (VDTQEAGIRL…RPLIATSAWR (394 aa)) form the GRAS domain. The tract at residues 228-284 (IRLVHALLACAEAVQQENLSAAEALVKQIPLLAASQGGAMRKVAAYFGEALARRVFR) is leucine repeat I (LRI). The LxCxE motif signature appears at 235 to 239 (LACAE). The tract at residues 303–368 (HAHFYESCPY…GGPPSFRLTG (66 aa)) is VHIID. A VHIID motif is present at residues 334-338 (VHVVD). A leucine repeat II (LRII) region spans residues 382 to 421 (QVGWKLAQFAHTIRVDFQYRGLVAATLADLEPFMLQPEGE). Residues 431-535 (IAVNSVFEMH…EVYLGRQICN (105 aa)) form a PFYRE region. Residues 538-614 (ACEGTERTER…RPLIATSAWR (77 aa)) form an SAW region.

The protein belongs to the GRAS family. DELLA subfamily. In terms of processing, phosphorylated. Post-translationally, ubiquitinated. Upon GA application it is ubiquitinated, leading to its subsequent degradation. In terms of tissue distribution, apparently restricted to regions where growth is occurring in the leaf blade. Localizes almost exclusively to the basal elongation zone (EZ) for the elongating blades of L1, L2 and L3. More detailed fractionation of the L3 blade shows that in cv. Himalaya, it is preferentially localized to the basal third of the EZ, but its presence can still be detected toward the end of the EZ (at protein level).

The protein localises to the nucleus. Its function is as follows. Probable transcriptional regulator that acts as a repressor of the gibberellin (GA) signaling pathway. Probably acts by participating in large multiprotein complexes that repress transcription of GA-inducible genes. Upon GA application, it is degraded by the proteasome, allowing the GA signaling pathway. Acts as a negative regulator of GAMYB gene expression. This is DELLA protein SLN1 (SLN1) from Hordeum vulgare (Barley).